An 867-amino-acid polypeptide reads, in one-letter code: Probable potassium transporter 15 (867 aa).

The segment covering 1 to 13 (MAASSSSSASASA) has biased composition (low complexity). Residues 1-88 (MAASSSSSAS…EGEGEDGEKQ (88 aa)) form a disordered region. Over 1–124 (MAASSSSSAS…DSEEFDFGRT (124 aa)) the chain is Cytoplasmic. Acidic residues predominate over residues 32–44 (TEEDDEGEEDGDT). Positions 45 to 54 (VEAAAAAVGA) are enriched in low complexity. Over residues 63 to 84 (SEEEEDEEDGGGGGEGEGEGED) the composition is skewed to acidic residues. Residues 125-145 (MFLALQTLAVVFGDIGISPLY) form a helical membrane-spanning segment. Topologically, residues 146-167 (TFDVMFSKYPILGEEDVLGALS) are extracellular. Residues 168–188 (LVLYTLISMPLVKYVLVVLWA) form a helical membrane-spanning segment. The Cytoplasmic segment spans residues 189–252 (NDDGEGGIFA…KLESSLLLKK (64 aa)). Residues 253–273 (LLLGLVLFGTAMFISNGVITP) form a helical membrane-spanning segment. Residues 274 to 285 (AMSVLSAVSGLK) lie on the Extracellular side of the membrane. The chain crosses the membrane as a helical span at residues 286–306 (VGIPNASQGLVVMISVVLLVI). The Cytoplasmic segment spans residues 307 to 317 (LYSVQRYATSK). Residues 318 to 338 (MGFALGPSLLIWFCCLGGIGI) form a helical membrane-spanning segment. Residues 339-365 (YNLSTYGPAAFKAFNPLYIIYYFGRNP) are Extracellular-facing. An N-linked (GlcNAc...) asparagine glycan is attached at Asn340. Residues 366–386 (FQAWLSLAGCLLCATGSEAIF) form a helical membrane-spanning segment. The Cytoplasmic segment spans residues 387–400 (ANLSYFPVRYVQSM). Residues 401–421 (FALLVLPCLVLAYLGQGAFLI) traverse the membrane as a helical segment. Residues 422-433 (ANQNSSEQIFFS) lie on the Extracellular side of the membrane. Asn425 carries N-linked (GlcNAc...) asparagine glycosylation. A helical membrane pass occupies residues 434–454 (SIPSGVFWPVFLIANLAALIA). The Cytoplasmic portion of the chain corresponds to 455–490 (SRTMTTAIFQCLKQSIALGCFPRLKIIHTSRKFMAK). The chain crosses the membrane as a helical span at residues 491 to 511 (IYIPVVNWFLLFSCLGFILLF). At 512 to 522 (RSIYDVGNAYA) the chain is on the extracellular side. Residues 523–543 (IAELGVMIMATVYVTIIMLLI) form a helical membrane-spanning segment. The Cytoplasmic portion of the chain corresponds to 544-545 (WE). A helical transmembrane segment spans residues 546–566 (TSIVKVLSFVITFLSLELVFF). Over 567 to 572 (SSSLSS) the chain is Extracellular. A helical membrane pass occupies residues 573-593 (VGDGGWALIIFASGILMVMFI). Residues 594-867 (WNYGSKLKYD…VMQVRLTSYV (274 aa)) lie on the Cytoplasmic side of the membrane.

The protein belongs to the HAK/KUP transporter (TC 2.A.72.3) family.

Its subcellular location is the membrane. High-affinity potassium transporter. This chain is Probable potassium transporter 15 (HAK15), found in Oryza sativa subsp. japonica (Rice).